A 361-amino-acid polypeptide reads, in one-letter code: Nicotinate-nucleotide--dimethylbenzimidazole phosphoribosyltransferase (361 aa).

Glutamate 320 functions as the Proton acceptor in the catalytic mechanism.

It belongs to the CobT family. As to quaternary structure, homodimer.

The catalysed reaction is 5,6-dimethylbenzimidazole + nicotinate beta-D-ribonucleotide = alpha-ribazole 5'-phosphate + nicotinate + H(+). Its pathway is nucleoside biosynthesis; alpha-ribazole biosynthesis; alpha-ribazole from 5,6-dimethylbenzimidazole: step 1/2. Catalyzes the synthesis of alpha-ribazole-5'-phosphate from nicotinate mononucleotide (NAMN) and 5,6-dimethylbenzimidazole (DMB). This is Nicotinate-nucleotide--dimethylbenzimidazole phosphoribosyltransferase from Shigella boydii serotype 18 (strain CDC 3083-94 / BS512).